Consider the following 328-residue polypeptide: Tetraacyldisaccharide 4'-kinase (328 aa).

55 to 62 is a binding site for ATP; the sequence is TAGGNGKT.

This sequence belongs to the LpxK family.

The enzyme catalyses a lipid A disaccharide + ATP = a lipid IVA + ADP + H(+). Its pathway is glycolipid biosynthesis; lipid IV(A) biosynthesis; lipid IV(A) from (3R)-3-hydroxytetradecanoyl-[acyl-carrier-protein] and UDP-N-acetyl-alpha-D-glucosamine: step 6/6. In terms of biological role, transfers the gamma-phosphate of ATP to the 4'-position of a tetraacyldisaccharide 1-phosphate intermediate (termed DS-1-P) to form tetraacyldisaccharide 1,4'-bis-phosphate (lipid IVA). This chain is Tetraacyldisaccharide 4'-kinase, found in Escherichia coli O45:K1 (strain S88 / ExPEC).